Here is a 255-residue protein sequence, read N- to C-terminus: TIR domain-containing protein (255 aa).

The TIR domain maps to 9–185; it reads LSDQVFINFR…DIVKEVKKQL (177 aa). Residue glutamate 83 is part of the active site. 2 helical membrane passes run 195–215 and 223–243; these read AIGV…FIAP and FFQT…SWFW. The KASH domain occupies 201 to 255; it reads LAITINLIFSFFIAPKYLPDQKFFQTPEWFIGTLAVVLASWFWYKNNQNKAPPPS.

In terms of assembly, forms homomers. Interacts with SUN1, SUN2, SUN3, SUN4 and SUN5.

The protein resides in the nucleus membrane. The catalysed reaction is NAD(+) + H2O = ADP-D-ribose + nicotinamide + H(+). Functionally, could play a role in nuclear morphology, specifically nuclear size. This Arabidopsis thaliana (Mouse-ear cress) protein is TIR domain-containing protein.